The following is a 217-amino-acid chain: Putative peroxiredoxin Q, chloroplastic (217 aa).

The transit peptide at 1 to 66 directs the protein to the chloroplast; it reads MAFAVSTACR…PSTTGRNRIV (66 aa). Residues 70-217 form the Thioredoxin domain; the sequence is VSKGSAAPNF…GETLKILQSL (148 aa). Catalysis depends on cysteine 112, which acts as the Cysteine sulfenic acid (-SOH) intermediate. The cysteines at positions 112 and 117 are disulfide-linked.

The protein belongs to the peroxiredoxin family. BCP/PrxQ subfamily. Monomer.

The protein resides in the plastid. It localises to the chloroplast thylakoid lumen. The catalysed reaction is a hydroperoxide + [thioredoxin]-dithiol = an alcohol + [thioredoxin]-disulfide + H2O. Thiol-specific peroxidase that catalyzes the reduction of hydrogen peroxide and organic hydroperoxides to water and alcohols, respectively. Plays a role in cell protection against oxidative stress by detoxifying peroxides. This is Putative peroxiredoxin Q, chloroplastic from Oryza sativa subsp. indica (Rice).